A 244-amino-acid polypeptide reads, in one-letter code: MSKCLQQLKRQLQHFGIDGCSLADGDIDYFFTVTGIDRGWGCGWRNIQMLISWLQYTNPNWFKRNFSSGNYEINSLQSLLLSAWMKGIDAEGYAQLGDNLHGKWIGATEVYSLFTGLFVNVALVDFDFRSEASASNALFLYVKKHFESSNDTSNVSPCYLQFQGHSIIIIGFCSSLETLVVLDPDRYQSVQKKFVNIADFNHCYMRKKRSLKFSQFQLVHFKQNIFLNDFSSKLEVRSTRISDF.

C42 serves as the catalytic Nucleophile. Catalysis depends on H165, which acts as the Proton acceptor. D183 is a catalytic residue.

The protein belongs to the peptidase C78 family. ZUFSP subfamily.

Its subcellular location is the cytoplasm. It catalyses the reaction Thiol-dependent hydrolysis of ester, thioester, amide, peptide and isopeptide bonds formed by the C-terminal Gly of ubiquitin (a 76-residue protein attached to proteins as an intracellular targeting signal).. Functionally, deubiquitinase with endodeubiquitinase activity that preferentially cleaves 'Lys-48'-linked polyubiquitin chains. Shows only weak activity against 'Lys-63' and 'Lys-11'-linked chains. Has a role in meiosis. The polypeptide is Ubiquitin carboxyl-terminal hydrolase mug105 (mug105) (Schizosaccharomyces pombe (strain 972 / ATCC 24843) (Fission yeast)).